We begin with the raw amino-acid sequence, 941 residues long: HMG box transcription factor BBX (941 aa).

Positions 1–18 (MKGSNRNKDHSAEGEGVG) are enriched in basic and acidic residues. Disordered stretches follow at residues 1–21 (MKGS…GKRP), 39–80 (FSEE…EQRA), 157–200 (VKSP…FGMA), and 221–242 (TPEV…LRQK). Acidic residues-rich tracts occupy residues 39–52 (FSEE…EEDI) and 63–75 (LEQD…DDES). A DNA-binding region (HMG box) is located at residues 80–148 (ARRPMNAFLL…AFMKANPGYK (69 aa)). The span at 177 to 191 (SSRDLPSPKKAKTEE) shows a compositional bias: basic and acidic residues. Position 243 is a phosphoserine (serine 243). Residues 326 to 370 (GRIKELEKGKEEKEIKMEKTDETRLQKEAEFEKSAKENLRDSKEL) are a coiled coil. Lysine 385 participates in a covalent cross-link: Glycyl lysine isopeptide (Lys-Gly) (interchain with G-Cter in SUMO2). The tract at residues 438 to 482 (IEDPAALNKPEKLKKKKKKSKMDRHGNDKSTPKKTCKKRQSSESD) is disordered. The segment covering 449-459 (KLKKKKKKSKM) has biased composition (basic residues). Phosphoserine occurs at positions 478 and 485. Basic and acidic residues-rich tracts occupy residues 499–508 (GIEKLGDTPR) and 536–552 (KKMS…ESRP). 2 disordered regions span residues 499–600 (GIEK…SDCH) and 635–677 (NVDR…KKTK). A Glycyl lysine isopeptide (Lys-Gly) (interchain with G-Cter in SUMO2) cross-link involves residue lysine 573. Low complexity predominate over residues 661–670 (TFSQSGTSGS). Residue lysine 696 forms a Glycyl lysine isopeptide (Lys-Gly) (interchain with G-Cter in SUMO2) linkage. Phosphoserine is present on serine 704. Disordered stretches follow at residues 714–771 (PVPR…DKWS), 803–888 (IPSI…SSTP), and 912–941 (HRGQ…CADQ). Over residues 723–742 (GNVSSEPTKTSKGPFQSQKK) the composition is skewed to polar residues. Positions 743–757 (NLFHKIVSKYKHKKE) are enriched in basic residues. Positions 758–771 (KPNVPEKGSGDKWS) are enriched in basic and acidic residues. Residues 805-817 (SIFNTPEPTTTQE) are compositionally biased toward polar residues. Serine 822 carries the post-translational modification Phosphoserine. The span at 823–834 (QKRKARKTKITH) shows a compositional bias: basic residues. Position 844 is a phosphoserine (serine 844). Residues 866-882 (TETDCNDKCSHNTEVGE) are compositionally biased toward basic and acidic residues.

Its subcellular location is the nucleus. Functionally, transcription factor that is necessary for cell cycle progression from G1 to S phase. This Homo sapiens (Human) protein is HMG box transcription factor BBX (BBX).